The sequence spans 343 residues: L-threonine 3-dehydrogenase (343 aa).

C40 serves as a coordination point for Zn(2+). Catalysis depends on charge relay system residues T42 and H45. Residues H65, E66, C95, C98, C101, and C109 each coordinate Zn(2+). NAD(+) contacts are provided by residues I177, D197, R202, L264–I266, and I288–Y289.

The protein belongs to the zinc-containing alcohol dehydrogenase family. As to quaternary structure, homotetramer. Requires Zn(2+) as cofactor.

The protein localises to the cytoplasm. It catalyses the reaction L-threonine + NAD(+) = (2S)-2-amino-3-oxobutanoate + NADH + H(+). It participates in amino-acid degradation; L-threonine degradation via oxydo-reductase pathway; glycine from L-threonine: step 1/2. Functionally, catalyzes the NAD(+)-dependent oxidation of L-threonine to 2-amino-3-ketobutyrate. The polypeptide is L-threonine 3-dehydrogenase (Aliivibrio salmonicida (strain LFI1238) (Vibrio salmonicida (strain LFI1238))).